A 120-amino-acid chain; its full sequence is ATP-dependent Clp protease adapter protein ClpS (120 aa).

The disordered stretch occupies residues 1-25 (MHARSEIRLTFNQDRPQSNEDDGSG).

It belongs to the ClpS family. As to quaternary structure, binds to the N-terminal domain of the chaperone ClpA.

In terms of biological role, involved in the modulation of the specificity of the ClpAP-mediated ATP-dependent protein degradation. This Pseudomonas putida (strain W619) protein is ATP-dependent Clp protease adapter protein ClpS.